The primary structure comprises 124 residues: BLOC-1-related complex subunit 8 (124 aa).

The tract at residues 102-124 is disordered; it reads SSSQGRSAVINPNETPAHTSVTP.

This sequence belongs to the BORCS8 family.

Its subcellular location is the lysosome membrane. Its function is as follows. As part of a BORC-like complex, it may play a role in the movement and localization of lysosomes at the cell periphery. Associated with the cytosolic face of lysosomes, this complex may couple lysosomes to microtubule plus-end-directed kinesin motors, driving lysosome movement toward the cell periphery. The protein is BLOC-1-related complex subunit 8 of Danio rerio (Zebrafish).